The primary structure comprises 410 residues: Digeranylgeranylglycerophospholipid reductase (410 aa).

Residues alanine 15, glutamate 34, valine 118, aspartate 286, glycine 298, and isoleucine 299 each coordinate FAD. Residues lysine 343 and alanine 379 each coordinate a 2,3-bis-O-(geranylgeranyl)-sn-glycerol 1-phospholipid.

Belongs to the geranylgeranyl reductase family. DGGGPL reductase subfamily. FAD is required as a cofactor.

It carries out the reaction a 2,3-bis-O-phytanyl-sn-glycerol 1-phospholipid + 8 A = a 2,3-bis-O-(geranylgeranyl)-sn-glycerol 1-phospholipid + 8 AH2. The enzyme catalyses 2,3-bis-O-(phytanyl)-sn-glycerol 1-phosphate + 8 A = 2,3-bis-O-(geranylgeranyl)-sn-glycerol 1-phosphate + 8 AH2. The catalysed reaction is CDP-2,3-bis-O-(geranylgeranyl)-sn-glycerol + 8 AH2 = CDP-2,3-bis-O-(phytanyl)-sn-glycerol + 8 A. It catalyses the reaction archaetidylserine + 8 AH2 = 2,3-bis-O-phytanyl-sn-glycero-3-phospho-L-serine + 8 A. It functions in the pathway membrane lipid metabolism; glycerophospholipid metabolism. Is involved in the reduction of 2,3-digeranylgeranylglycerophospholipids (unsaturated archaeols) into 2,3-diphytanylglycerophospholipids (saturated archaeols) in the biosynthesis of archaeal membrane lipids. Can fully reduce the unsaturated isoprenoid side chains of membrane phospholipids and glycolipids. Is also able to reduce the omega-position isoprene of dolichol phosphate. The chain is Digeranylgeranylglycerophospholipid reductase from Haloferax volcanii (strain ATCC 29605 / DSM 3757 / JCM 8879 / NBRC 14742 / NCIMB 2012 / VKM B-1768 / DS2) (Halobacterium volcanii).